The sequence spans 700 residues: Elongation factor G 1 (700 aa).

The region spanning 8–290 (QNYRNIGISA…AVIEFMPSPI (283 aa)) is the tr-type G domain. GTP is bound by residues 17–24 (AHIDAGKT), 88–92 (DTPGH), and 142–145 (NKMD).

It belongs to the TRAFAC class translation factor GTPase superfamily. Classic translation factor GTPase family. EF-G/EF-2 subfamily.

The protein resides in the cytoplasm. In terms of biological role, catalyzes the GTP-dependent ribosomal translocation step during translation elongation. During this step, the ribosome changes from the pre-translocational (PRE) to the post-translocational (POST) state as the newly formed A-site-bound peptidyl-tRNA and P-site-bound deacylated tRNA move to the P and E sites, respectively. Catalyzes the coordinated movement of the two tRNA molecules, the mRNA and conformational changes in the ribosome. This chain is Elongation factor G 1, found in Polaromonas sp. (strain JS666 / ATCC BAA-500).